The following is a 51-amino-acid chain: Perinerin (51 aa).

Functionally, antibacterial activity against both Gram-negative and Gram-positive bacteria. Shows marked activity against P.aeruginosa, B.megaterium, A.viridans, moderate activity against E.coli K-12, S.aureus and M.luteus, and minor activity against P.vulgaris. Antifungal activity against P.heliothis. The protein is Perinerin of Perinereis aibuhitensis (Korean lugworm).